A 240-amino-acid polypeptide reads, in one-letter code: Cell division control protein 14 (240 aa).

Interacts with sid1.

It localises to the cytoplasm. Its subcellular location is the cytoskeleton. It is found in the microtubule organizing center. The protein resides in the spindle pole body. In terms of biological role, has a role in the septation initiation network (SIN) required for cytokinesis. This chain is Cell division control protein 14 (cdc14), found in Schizosaccharomyces pombe (strain 972 / ATCC 24843) (Fission yeast).